Here is a 414-residue protein sequence, read N- to C-terminus: Phospholipase A1-IIbeta (414 aa).

Residue Lys-19 forms a Glycyl lysine isopeptide (Lys-Gly) (interchain with G-Cter in ubiquitin) linkage. Residues 191-217 (DKTSAQEQVQEELKRLLELYKNEDVTI) are a coiled coil. The active-site Acyl-ester intermediate is the Ser-223. Catalysis depends on charge relay system residues Ser-223, Asp-289, and His-326. Positions 386 to 414 (DGTWKLNGDRSKKKQEEEDEKEENNCKFP) are disordered. Positions 390–410 (KLNGDRSKKKQEEEDEKEENN) form a coiled coil. Residues 392-401 (NGDRSKKKQE) are compositionally biased toward basic and acidic residues.

Belongs to the AB hydrolase superfamily. Lipase family.

Its subcellular location is the cytoplasm. Its function is as follows. Acylhydrolase that catalyzes the hydrolysis of phospholipids at the sn-1 position. The polypeptide is Phospholipase A1-IIbeta (Arabidopsis thaliana (Mouse-ear cress)).